Consider the following 848-residue polypeptide: Protein MEI2-like 2 (848 aa).

RRM domains lie at 197–270 (RTLF…FSIP) and 282–355 (GTLV…PSRP). 3 disordered regions span residues 370 to 400 (IDQD…QYSS), 455 to 523 (NQPH…SQGQ), and 826 to 848 (ATGD…GEEL).

Its function is as follows. Probable RNA-binding protein that may play a role in growth regulation. The polypeptide is Protein MEI2-like 2 (ML2) (Oryza sativa subsp. japonica (Rice)).